The sequence spans 232 residues: Nucleoside diphosphate kinase 2, chloroplastic (232 aa).

The transit peptide at methionine 1–alanine 79 directs the protein to the chloroplast. ATP is bound by residues lysine 92, phenylalanine 140, arginine 168, threonine 174, arginine 185, and asparagine 195. Residue histidine 198 is the Pros-phosphohistidine intermediate of the active site.

It belongs to the NDK family. Requires Mg(2+) as cofactor.

The protein resides in the plastid. The protein localises to the chloroplast. It carries out the reaction a 2'-deoxyribonucleoside 5'-diphosphate + ATP = a 2'-deoxyribonucleoside 5'-triphosphate + ADP. The enzyme catalyses a ribonucleoside 5'-diphosphate + ATP = a ribonucleoside 5'-triphosphate + ADP. Major role in the synthesis of nucleoside triphosphates other than ATP. The ATP gamma phosphate is transferred to the NDP beta phosphate via a ping-pong mechanism, using a phosphorylated active-site intermediate. The polypeptide is Nucleoside diphosphate kinase 2, chloroplastic (Nicotiana tabacum (Common tobacco)).